A 530-amino-acid polypeptide reads, in one-letter code: Pancreatic secretory granule membrane major glycoprotein GP2 (530 aa).

Positions 1 to 21 (MVACDLLWLAAASCLLTLVFP) are cleaved as a signal peptide. An N-linked (GlcNAc...) asparagine glycan is attached at N33. Intrachain disulfides connect C41/C52, C56/C150, C78/C168, C100/C138, C106/C173, C131/C139, C183/C193, C187/C202, C204/C234, C222/C313, and C254/C277. The segment at 54-74 (DPCQNHTVLNDPSRSTENTVS) is D10C. N-linked (GlcNAc...) asparagine glycans are attached at residues N58 and N127. The 45-residue stretch at 179-223 (APKKCEIACRPEEECVFQNNSWTCVCRQDLNVSDTLSLQPLLDCG) folds into the EGF-like domain. 2 N-linked (GlcNAc...) asparagine glycosylation sites follow: N197 and N209. Positions 221–314 (DCGANEIKVK…FLVNVNFQCA (94 aa)) are ZP-N. The 257-residue stretch at 221–477 (DCGANEIKVK…PSCSTSRLRS (257 aa)) folds into the ZP domain. 2 N-linked (GlcNAc...) asparagine glycosylation sites follow: N284 and N320. The interval 315 to 338 (YPLDMNVSLQTALQPIVSSLNVDV) is flexible ZP-N/ZP-C linker. Residues 339-350 (GGAGEFTVTMAL) are internal hydrophobic patch (IHP). The ZP-C stretch occupies residues 339 to 477 (GGAGEFTVTM…PSCSTSRLRS (139 aa)). 3 disulfide bridges follow: C394-C454, C415-C470, and C459-C466. Residues 484 to 492 (LTRVLDIGP) are external hydrophobic patch (EHP). The GPI-anchor amidated asparagine moiety is linked to residue N505. Residues 506–530 (GTPRNTGFLLAWPTFFLPVFLAWLF) constitute a propeptide, removed in mature form.

In terms of assembly, interacts with SYCN. Interacts with bacterial adhesin fimH. Post-translationally, N-glycosylated. As to expression, expressed in pancreas.

It is found in the zymogen granule membrane. It localises to the secreted. Its subcellular location is the cell membrane. The protein resides in the apical cell membrane. The protein localises to the membrane raft. It is found in the endosome. Its function is as follows. Functions as an intestinal M-cell transcytotic receptor specific of type-I-piliated bacteria that participates in the mucosal immune response toward these bacteria. At the apical membrane of M-cells it binds fimH, a protein of the bacteria type I pilus tip. Internalizes bound bacteria, like E.coli and S.typhimurium, from the lumen of the intestine and delivers them, through M-cells, to the underlying organized lymphoid follicles where they are captured by antigen-presenting dendritic cells to elicit a mucosal immune response. The protein is Pancreatic secretory granule membrane major glycoprotein GP2 of Rattus norvegicus (Rat).